The sequence spans 189 residues: UPF0301 protein RT0098 (189 aa).

This sequence belongs to the UPF0301 (AlgH) family.

The chain is UPF0301 protein RT0098 from Rickettsia typhi (strain ATCC VR-144 / Wilmington).